Reading from the N-terminus, the 119-residue chain is Large ribosomal subunit protein bL20 (119 aa).

The protein belongs to the bacterial ribosomal protein bL20 family.

Functionally, binds directly to 23S ribosomal RNA and is necessary for the in vitro assembly process of the 50S ribosomal subunit. It is not involved in the protein synthesizing functions of that subunit. In Lactococcus lactis subsp. cremoris (strain MG1363), this protein is Large ribosomal subunit protein bL20.